A 301-amino-acid chain; its full sequence is 4-hydroxybenzoate octaprenyltransferase (301 aa).

Transmembrane regions (helical) follow at residues 34–54 (IGSL…AGGL), 57–77 (LWTL…GCVI), 108–128 (LWVF…LNWL), 163–183 (WGIP…AWLL), 222–242 (DLIA…LVGL), 248–268 (IAYW…FHIA), and 280–300 (FLHN…SLAL).

Belongs to the UbiA prenyltransferase family. It depends on Mg(2+) as a cofactor.

It is found in the cell inner membrane. The catalysed reaction is all-trans-octaprenyl diphosphate + 4-hydroxybenzoate = 4-hydroxy-3-(all-trans-octaprenyl)benzoate + diphosphate. Its pathway is cofactor biosynthesis; ubiquinone biosynthesis. Functionally, catalyzes the prenylation of para-hydroxybenzoate (PHB) with an all-trans polyprenyl group. Mediates the second step in the final reaction sequence of ubiquinone-8 (UQ-8) biosynthesis, which is the condensation of the polyisoprenoid side chain with PHB, generating the first membrane-bound Q intermediate 3-octaprenyl-4-hydroxybenzoate. The polypeptide is 4-hydroxybenzoate octaprenyltransferase (Xanthomonas campestris pv. campestris (strain 8004)).